Here is a 487-residue protein sequence, read N- to C-terminus: Glutamyl-tRNA(Gln) amidotransferase subunit A (487 aa).

Active-site charge relay system residues include Lys-77 and Ser-152. Ser-176 functions as the Acyl-ester intermediate in the catalytic mechanism.

This sequence belongs to the amidase family. GatA subfamily. Heterotrimer of A, B and C subunits.

The enzyme catalyses L-glutamyl-tRNA(Gln) + L-glutamine + ATP + H2O = L-glutaminyl-tRNA(Gln) + L-glutamate + ADP + phosphate + H(+). Its function is as follows. Allows the formation of correctly charged Gln-tRNA(Gln) through the transamidation of misacylated Glu-tRNA(Gln) in organisms which lack glutaminyl-tRNA synthetase. The reaction takes place in the presence of glutamine and ATP through an activated gamma-phospho-Glu-tRNA(Gln). This chain is Glutamyl-tRNA(Gln) amidotransferase subunit A, found in Limosilactobacillus fermentum (strain NBRC 3956 / LMG 18251) (Lactobacillus fermentum).